The chain runs to 141 residues: Cystatin (141 aa).

Positions 1-26 (MVHSQLPVVALLRLLCALLLLPSATM) are cleaved as a signal peptide. The Cystatin domain maps to 29 to 129 (GGLSPRSVTD…CRFQVWSRPW (101 aa)). The Secondary area of contact signature appears at 73–77 (QVVAG). 2 disulfides stabilise this stretch: cysteine 91/cysteine 107 and cysteine 120/cysteine 140.

It belongs to the cystatin family. As to expression, expressed at a low level by the venom gland (at protein level).

The protein resides in the secreted. Functionally, inhibits various C1 cysteine proteases including cathepsin L, papain and cathepsin B. This protein has no toxic activity and its function in the venom is unknown. It may play a role as a housekeeping or regulatory protein. This is Cystatin from Notechis scutatus scutatus (Mainland tiger snake).